The chain runs to 465 residues: FAD-dependent monooxygenase olcE (465 aa).

The helical transmembrane segment at 9–29 threads the bilayer; sequence IIIGGSVAGLTLALSLNKIGI. The FAD site is built by E35, G49, R108, D308, and A321.

It belongs to the paxM FAD-dependent monooxygenase family. FAD serves as cofactor.

It is found in the membrane. It participates in secondary metabolite biosynthesis; terpenoid biosynthesis. Functionally, FAD-dependent monooxygenase; part of the gene cluster that mediates the biosynthesis of 15-deoxyoxalicine B. The first step of the pathway is the synthesis of nicotinyl-CoA from nicotinic acid by the nicotinic acid-CoA ligase olcI. Nicotinyl-CoA is then a substrate of polyketide synthase olcA to produce 4-hydroxy-6-(3-pyridinyl)-2H-pyran-2-one (HPPO) which is further prenylated by the polyprenyl transferase olcH to yield geranylgeranyl-HPPO. Geranylgeranyl pyrophosphate is provided by the cluster-specific geranylgeranyl pyrophosphate synthase olcC. The FAD-dependent monooxygenase olcE catalyzes the epoxidation of geranylgeranyl-HPPO and the terpene cyclase olcD catalyzes the cyclization of the terpenoid component, resulting in the formation of the tricyclic terpene moiety seen in predecaturin E. The cytochrome P450 monooxygenase then catalyzes the allylic oxidation of predecaturin E, which is followed by spirocylization with concomitant loss of one molecule of water to form decaturin E. Decaturin E is the substrate of the cytochrome P450 monooxygenase olcJ which hydroxylates it at the C-29 position to form decaturin F. The short-chain dehydrogenase/reductase olcF may catalyze the oxidation of decaturin F to generate the 29-hydroxyl-27-one intermediate, and subsequent hemiacetal formation probably leads to the formation of decaturin C. The dioxygenase olcK may be a peroxisomal enzyme that catalyzes the hydroxylation of decaturin C into decaturin A once decaturin C is shuttled into the peroxisome by the MFS transporter olcL. Finally the cytochrome P450 monooxygenase olcB catalyzes the oxidative rearrangement to yield 15-deoxyoxalicine B. In the absence of olcJ, decaturin E may be shunted to a pathway in which it is oxidized to a ketone, possibly by olcF, to form decaturin D, which undergoes further allylic oxidation to yield decaturin G. Moreover, in the absence of oclK or oclL, oclB can convert decaturin C into 15-deoxyoxalicine A. The polypeptide is FAD-dependent monooxygenase olcE (Penicillium canescens).